A 319-amino-acid chain; its full sequence is Transaldolase (319 aa).

Lys-126 functions as the Schiff-base intermediate with substrate in the catalytic mechanism.

It belongs to the transaldolase family. Type 1 subfamily. Homodimer.

It is found in the cytoplasm. It catalyses the reaction D-sedoheptulose 7-phosphate + D-glyceraldehyde 3-phosphate = D-erythrose 4-phosphate + beta-D-fructose 6-phosphate. The protein operates within carbohydrate degradation; pentose phosphate pathway; D-glyceraldehyde 3-phosphate and beta-D-fructose 6-phosphate from D-ribose 5-phosphate and D-xylulose 5-phosphate (non-oxidative stage): step 2/3. Transaldolase is important for the balance of metabolites in the pentose-phosphate pathway. This is Transaldolase from Bordetella avium (strain 197N).